Consider the following 257-residue polypeptide: Protein TONNEAU 1b (257 aa).

The 33-residue stretch at 73-105 (SGRLLSALICEYLDWAQLNHTLKVYQPECNSAK) folds into the LisH domain. Disordered stretches follow at residues 148-216 (QVMG…EDMP) and 231-257 (LDRK…EGKD). A compositionally biased stretch (low complexity) spans 187–199 (SVSASQASGAATS). Composition is skewed to basic and acidic residues over residues 201 to 212 (YRKDESNWRYDT) and 244 to 257 (NVKD…EGKD).

In terms of assembly, interacts with CEN1, LNG1/TRM2 and LNG2/TRM1 (via C-terminus).

The protein resides in the cytoplasm. Its subcellular location is the cytoskeleton. Its function is as follows. Involved in the control of the dynamic organization of the cortical cytoskeleton. May play a role in the organization of microtubule arrays at the centrosome through interaction with centrin 1 (CEN1). The sequence is that of Protein TONNEAU 1b (TON1B) from Arabidopsis thaliana (Mouse-ear cress).